A 422-amino-acid polypeptide reads, in one-letter code: Probable ornithine aminotransferase, mitochondrial (422 aa).

Lys-273 carries the post-translational modification N6-(pyridoxal phosphate)lysine.

It belongs to the class-III pyridoxal-phosphate-dependent aminotransferase family. It depends on pyridoxal 5'-phosphate as a cofactor.

It localises to the mitochondrion matrix. The enzyme catalyses a 2-oxocarboxylate + L-ornithine = L-glutamate 5-semialdehyde + an L-alpha-amino acid. It participates in amino-acid biosynthesis; L-proline biosynthesis; L-glutamate 5-semialdehyde from L-ornithine: step 1/1. This is Probable ornithine aminotransferase, mitochondrial from Caenorhabditis elegans.